A 311-amino-acid polypeptide reads, in one-letter code: MENNVIVFFLSFLSSVVFIEGFKRFQKKLRIGQYIREEGPDLHNYKTGTPTAAGLVFIPIFIAVLLNFNRGPESFLIAFSALSYGLIGAIDDFMKIKRKNASGITAVQKLFMQFTAAFIIVYFIQQINPHTYLIVPFSGYKLDLGWFYYLLSSVVIVGVSNAVNLTDGVDGLAGFVFIGSIVPLLIVGYQSVVYLSLIGLLMGFLWHNWHPASIFMGDAGSLALGGILATSFALNGLELFLIFFGFIFLLETLSVIIQVTSFKFRGKRVFRMSPIHHHFELLGWKEEKIAFRFSTLALLVSLLGIIGWREL.

10 helical membrane-spanning segments follow: residues 2–22, 48–68, 74–94, 104–124, 144–164, 168–188, 192–212, 214–234, 237–257, and 288–308; these read ENNVIVFFLSFLSSVVFIEGF, GTPTAAGLVFIPIFIAVLLNF, SFLIAFSALSYGLIGAIDDFM, ITAVQKLFMQFTAAFIIVYFI, LGWFYYLLSSVVIVGVSNAVN, GVDGLAGFVFIGSIVPLLIVG, VVYLSLIGLLMGFLWHNWHPA, IFMGDAGSLALGGILATSFAL, LELFLIFFGFIFLLETLSVII, and KIAFRFSTLALLVSLLGIIGW.

The protein belongs to the glycosyltransferase 4 family. MraY subfamily. Requires Mg(2+) as cofactor.

It is found in the cell inner membrane. It carries out the reaction UDP-N-acetyl-alpha-D-muramoyl-L-alanyl-gamma-D-glutamyl-meso-2,6-diaminopimeloyl-D-alanyl-D-alanine + di-trans,octa-cis-undecaprenyl phosphate = di-trans,octa-cis-undecaprenyl diphospho-N-acetyl-alpha-D-muramoyl-L-alanyl-D-glutamyl-meso-2,6-diaminopimeloyl-D-alanyl-D-alanine + UMP. It functions in the pathway cell wall biogenesis; peptidoglycan biosynthesis. In terms of biological role, catalyzes the initial step of the lipid cycle reactions in the biosynthesis of the cell wall peptidoglycan: transfers peptidoglycan precursor phospho-MurNAc-pentapeptide from UDP-MurNAc-pentapeptide onto the lipid carrier undecaprenyl phosphate, yielding undecaprenyl-pyrophosphoryl-MurNAc-pentapeptide, known as lipid I. The sequence is that of Phospho-N-acetylmuramoyl-pentapeptide-transferase from Kosmotoga olearia (strain ATCC BAA-1733 / DSM 21960 / TBF 19.5.1).